A 1388-amino-acid polypeptide reads, in one-letter code: DNA-directed RNA polymerase subunit beta' (1388 aa).

4 residues coordinate Zn(2+): cysteine 65, cysteine 67, cysteine 80, and cysteine 83. Residues aspartate 456, aspartate 458, and aspartate 460 each contribute to the Mg(2+) site. Residues cysteine 812, cysteine 887, cysteine 894, and cysteine 897 each coordinate Zn(2+).

This sequence belongs to the RNA polymerase beta' chain family. The RNAP catalytic core consists of 2 alpha, 1 beta, 1 beta' and 1 omega subunit. When a sigma factor is associated with the core the holoenzyme is formed, which can initiate transcription. Mg(2+) serves as cofactor. Zn(2+) is required as a cofactor.

It catalyses the reaction RNA(n) + a ribonucleoside 5'-triphosphate = RNA(n+1) + diphosphate. Functionally, DNA-dependent RNA polymerase catalyzes the transcription of DNA into RNA using the four ribonucleoside triphosphates as substrates. This chain is DNA-directed RNA polymerase subunit beta', found in Protochlamydia amoebophila (strain UWE25).